We begin with the raw amino-acid sequence, 1704 residues long: Phospholipid-transporting ATPase ABCA3 (1704 aa).

Asn14 carries an N-linked (GlcNAc...) asparagine glycan. A helical transmembrane segment spans residues 22–42 (VLVTVLELFLPLLFSGILIWL). 3 N-linked (GlcNAc...) asparagine glycosylation sites follow: Asn53, Asn124, and Asn140. A run of 6 helical transmembrane segments spans residues 261–283 (YQLP…RAVV), 307–327 (AWFL…TLLF), 344–364 (SLVL…SFMV), 373–393 (MAAA…FFVA), 405–425 (LCSC…IGKF), and 447–467 (FCFG…GLVT). In terms of domain architecture, ABC transporter 1 spans 530-763 (IKIKHLSKVF…YGAGYHMTLV (234 aa)). 566-573 (GHNGAGKT) contributes to the ATP binding site. Residues Asn620 and Asn783 are each glycosylated (N-linked (GlcNAc...) asparagine). The next 7 helical transmembrane spans lie at 925-945 (MVAA…LAIN), 1100-1120 (IALN…ILAV), 1144-1164 (SALL…LVVF), 1183-1203 (LLLL…NFFF), 1213-1233 (LTIF…IMRI), 1245-1265 (LDHV…SSFY), and 1306-1326 (FVAS…LIET). Residues 1381 to 1614 (LIIKELSKVY…FGSGYSLRAK (234 aa)) form the ABC transporter 2 domain. 1416–1423 (GFNGAGKT) provides a ligand contact to ATP.

Belongs to the ABC transporter superfamily. ABCA family. As to quaternary structure, homooligomer; disulfide-linked. In terms of processing, N-glycosylated. Localization at intracellular vesicles is accompanied by processing of oligosaccharide from high mannose type to complex type. N-linked glycosylation at Asn-124 and Asn-140 is required for stability and efficient anterograde trafficking and prevents from proteasomal degradation. Proteolytically cleaved by CTSL and to a lower extent by CTSB within multivesicular bodies (MVB) and lamellar bodies (LB) leading to a mature form of 150 kDa. In terms of tissue distribution, expressed in brain, pancreas, skeletal muscle and heart. Highly expressed in the lung in an AT2-cell-specific manner. Weakly expressed in placenta, kidney and liver. Also expressed in medullary thyroid carcinoma cells (MTC) and in C-cell carcinoma.

It localises to the endosome. It is found in the multivesicular body membrane. The protein localises to the cytoplasmic vesicle membrane. The protein resides in the late endosome membrane. Its subcellular location is the lysosome membrane. The enzyme catalyses ATP + H2O + xenobioticSide 1 = ADP + phosphate + xenobioticSide 2.. It catalyses the reaction a 1,2-diacyl-sn-glycero-3-phosphocholine(in) + ATP + H2O = a 1,2-diacyl-sn-glycero-3-phosphocholine(out) + ADP + phosphate + H(+). The catalysed reaction is ATP + H2O + phospholipidSide 1 = ADP + phosphate + phospholipidSide 2.. It carries out the reaction 1,2-dihexadecanoyl-sn-glycero-3-phosphocholine(in) + ATP + H2O = 1,2-dihexadecanoyl-sn-glycero-3-phosphocholine(out) + ADP + phosphate + H(+). The enzyme catalyses cholesterol(in) + ATP + H2O = cholesterol(out) + ADP + phosphate + H(+). It catalyses the reaction a 1,2-diacyl-sn-glycero-3-phospho-(1'-sn-glycerol)(in) + ATP + H2O = a 1,2-diacyl-sn-glycero-3-phospho-(1'-sn-glycerol)(out) + ADP + phosphate + H(+). Its activity is regulated as follows. The ATP-dependent phosphatidylcholine transport is competitively inhibited by miltefosine. Its function is as follows. Catalyzes the ATP-dependent transport of phospholipids such as phosphatidylcholine and phosphoglycerol from the cytoplasm into the lumen side of lamellar bodies, in turn participates in the lamellar bodies biogenesis and homeostasis of pulmonary surfactant. Transports preferentially phosphatidylcholine containing short acyl chains. In addition plays a role as an efflux transporter of miltefosine across macrophage membranes and free cholesterol (FC) through intralumenal vesicles by removing FC from the cell as a component of surfactant and protects cells from free cholesterol toxicity. The chain is Phospholipid-transporting ATPase ABCA3 from Homo sapiens (Human).